The primary structure comprises 212 residues: Uracil phosphoribosyltransferase (212 aa).

5-phospho-alpha-D-ribose 1-diphosphate-binding positions include arginine 78, arginine 103, and 130–138 (DPMLATGGS). Residues isoleucine 193 and 198-200 (GDA) each bind uracil. Aspartate 199 is a binding site for 5-phospho-alpha-D-ribose 1-diphosphate.

It belongs to the UPRTase family. It depends on Mg(2+) as a cofactor.

The enzyme catalyses UMP + diphosphate = 5-phospho-alpha-D-ribose 1-diphosphate + uracil. It functions in the pathway pyrimidine metabolism; UMP biosynthesis via salvage pathway; UMP from uracil: step 1/1. With respect to regulation, allosterically activated by GTP. Its function is as follows. Catalyzes the conversion of uracil and 5-phospho-alpha-D-ribose 1-diphosphate (PRPP) to UMP and diphosphate. This is Uracil phosphoribosyltransferase from Ectopseudomonas mendocina (strain ymp) (Pseudomonas mendocina).